A 498-amino-acid polypeptide reads, in one-letter code: Glycerol kinase (498 aa).

ADP is bound at residue Thr12. Residues Thr12, Thr13, and Ser14 each coordinate ATP. Position 12 (Thr12) interacts with sn-glycerol 3-phosphate. Residue Arg16 participates in ADP binding. The sn-glycerol 3-phosphate site is built by Arg82, Glu83, Tyr134, and Asp244. Glycerol-binding residues include Arg82, Glu83, Tyr134, Asp244, and Gln245. Residues Thr266 and Gly310 each coordinate ADP. Thr266, Gly310, Gln314, and Gly411 together coordinate ATP. 2 residues coordinate ADP: Gly411 and Asn415.

It belongs to the FGGY kinase family.

The catalysed reaction is glycerol + ATP = sn-glycerol 3-phosphate + ADP + H(+). It functions in the pathway polyol metabolism; glycerol degradation via glycerol kinase pathway; sn-glycerol 3-phosphate from glycerol: step 1/1. Inhibited by fructose 1,6-bisphosphate (FBP). Key enzyme in the regulation of glycerol uptake and metabolism. Catalyzes the phosphorylation of glycerol to yield sn-glycerol 3-phosphate. The polypeptide is Glycerol kinase (Chloroflexus aurantiacus (strain ATCC 29366 / DSM 635 / J-10-fl)).